A 234-amino-acid chain; its full sequence is Alpha N-terminal protein methyltransferase 1 (234 aa).

S-adenosyl-L-methionine-binding positions include glycine 71, arginine 76, aspartate 93–valine 95, leucine 120–glutamine 121, and glutamine 136.

Belongs to the methyltransferase superfamily. NTM1 family. Expressed in uterine cells and PVT neurons of the tail. Expressed in pharynx, intestine and DVB tail neuron.

The enzyme catalyses N-terminal L-alanyl-L-prolyl-L-lysyl-[protein] + 3 S-adenosyl-L-methionine = N-terminal N,N,N-trimethyl-L-alanyl-L-prolyl-L-lysyl-[protein] + 3 S-adenosyl-L-homocysteine + 3 H(+). The catalysed reaction is N-terminal L-seryl-L-prolyl-L-lysyl-[protein] + 3 S-adenosyl-L-methionine = N-terminal N,N,N-trimethyl-L-seryl-L-prolyl-L-lysyl-[protein] + 3 S-adenosyl-L-homocysteine + 3 H(+). It carries out the reaction N-terminal L-prolyl-L-prolyl-L-lysyl-[protein] + 2 S-adenosyl-L-methionine = N-terminal N,N-dimethyl-L-prolyl-L-prolyl-L-lysyl-[protein] + 2 S-adenosyl-L-homocysteine + 2 H(+). Alpha-N-methyltransferase that methylates the N-terminus of target proteins containing the N-terminal motif [Ala/Pro/Ser]-Pro-Lys when the initiator Met is cleaved. Specifically catalyzes mono-, di- or tri-methylation of exposed alpha-amino group of Ala or Ser residue in the [Ala/Ser]-Pro-Lys motif and mono- or di-methylation of Pro in the Pro-Pro-Lys motif. Probably required for the synthesis of neurotransmitter melatonin from serotonin, which plays a role in promoting a sleep-like state, called lethargus, during larval development. The protein is Alpha N-terminal protein methyltransferase 1 of Caenorhabditis elegans.